The chain runs to 326 residues: Glycine N(alpha)-acyltransferase (326 aa).

Belongs to the acetyltransferase family.

The enzyme catalyses a (3R)-hydroxyacyl-[ACP] + glycine = a lyso-glycine lipid + holo-[ACP] + H(+). The catalysed reaction is (3R)-hydroxyhexadecanoyl-[ACP] + glycine = N-[(3R)-3-hydroxyhexadecanoyl]-glycine + holo-[ACP] + H(+). The protein operates within lipid metabolism. In terms of biological role, is involved in the production of glycine lipids (GL), which are phosphorus-free membrane lipids. Catalyzes the first step of GL biosynthesis, i.e. the N-acylation of glycine via addition of a 3-hydroxy fatty acyl group, to form a range of monoacylated glycine (also named lyso-glycine lipids or lyso-GL). As an example, catalyzes the production of commendamide, an N-acylated (3-OH C16:0) derivative of glycine with hemolytic activity and the ability to solubilize cholesterol micelles; this compound can also activate NF-kB through the G-protein coupled receptor GPCR G2A/132. This is Glycine N(alpha)-acyltransferase from Phocaeicola vulgatus (strain ATCC 8482 / DSM 1447 / JCM 5826 / CCUG 4940 / NBRC 14291 / NCTC 11154) (Bacteroides vulgatus).